The sequence spans 429 residues: Adenylosuccinate synthetase (429 aa).

GTP-binding positions include 12-18 (GDEGKGK) and 40-42 (GHT). Asp13 serves as the catalytic Proton acceptor. Asp13 and Gly40 together coordinate Mg(2+). IMP is bound by residues 13-16 (DEGK), 38-41 (NAGH), Thr128, Arg142, Gln223, Thr238, and Arg302. His41 (proton donor) is an active-site residue. 298 to 304 (TTTGRPR) contacts substrate. Residues Arg304, 330 to 332 (CID), and 412 to 414 (SVG) each bind GTP.

This sequence belongs to the adenylosuccinate synthetase family. Homodimer. Mg(2+) is required as a cofactor.

The protein resides in the cytoplasm. The catalysed reaction is IMP + L-aspartate + GTP = N(6)-(1,2-dicarboxyethyl)-AMP + GDP + phosphate + 2 H(+). The protein operates within purine metabolism; AMP biosynthesis via de novo pathway; AMP from IMP: step 1/2. In terms of biological role, plays an important role in the de novo pathway of purine nucleotide biosynthesis. Catalyzes the first committed step in the biosynthesis of AMP from IMP. The chain is Adenylosuccinate synthetase from Streptococcus mutans serotype c (strain ATCC 700610 / UA159).